A 202-amino-acid polypeptide reads, in one-letter code: Small ribosomal subunit protein uS4c (202 aa).

Residues 18–45 (LPGLTRKMAKRKSPPGQHGAASKKPSQY) form a disordered region. The region spanning 90–152 (MRLDTTIFRL…SRSRKLIEGY (63 aa)) is the S4 RNA-binding domain.

It belongs to the universal ribosomal protein uS4 family. Part of the 30S ribosomal subunit. Contacts protein S5. The interaction surface between S4 and S5 is involved in control of translational fidelity.

The protein resides in the plastid. Its subcellular location is the chloroplast. Functionally, one of the primary rRNA binding proteins, it binds directly to 16S rRNA where it nucleates assembly of the body of the 30S subunit. With S5 and S12 plays an important role in translational accuracy. This Nephroselmis olivacea (Green alga) protein is Small ribosomal subunit protein uS4c (rps4).